The chain runs to 314 residues: DNA-directed RNA polymerase subunit alpha (314 aa).

Residues 1–228 (MIEIEKPVIE…EHLNIFVGLT (228 aa)) form an alpha N-terminal domain (alpha-NTD) region. The tract at residues 245-314 (KEKVLEMTIE…ELGLGLRKEE (70 aa)) is alpha C-terminal domain (alpha-CTD).

The protein belongs to the RNA polymerase alpha chain family. In terms of assembly, homodimer. The RNAP catalytic core consists of 2 alpha, 1 beta, 1 beta' and 1 omega subunit. When a sigma factor is associated with the core the holoenzyme is formed, which can initiate transcription.

It catalyses the reaction RNA(n) + a ribonucleoside 5'-triphosphate = RNA(n+1) + diphosphate. Its function is as follows. DNA-dependent RNA polymerase catalyzes the transcription of DNA into RNA using the four ribonucleoside triphosphates as substrates. In Halalkalibacterium halodurans (strain ATCC BAA-125 / DSM 18197 / FERM 7344 / JCM 9153 / C-125) (Bacillus halodurans), this protein is DNA-directed RNA polymerase subunit alpha.